The sequence spans 1274 residues: RNA-directed RNA polymerase VP2 (1274 aa).

The region spanning 561-798 (LSTTSGSVVT…KLYALMGCRI (238 aa)) is the RdRp catalytic domain.

The protein belongs to the reoviridae RNA-directed RNA polymerase family.

It localises to the virion. It carries out the reaction RNA(n) + a ribonucleoside 5'-triphosphate = RNA(n+1) + diphosphate. In terms of biological role, RNA-directed RNA polymerase that is involved in transcription and genome replication. Following infection, it catalyzes the synthesis of fully conservative plus strands. After core assembly, which consists in recruitment of one capped plus-strand for each genomic segments and polymerase complexes, the polymerase switches mode and catalyzes the synthesis of complementary minus-strands. This is RNA-directed RNA polymerase VP2 (S2) from Aquareovirus C (isolate Golden shiner/USA/GSRV/1977) (AQRV-C).